Consider the following 100-residue polypeptide: Aspartyl/glutamyl-tRNA(Asn/Gln) amidotransferase subunit C (100 aa).

This sequence belongs to the GatC family. Heterotrimer of A, B and C subunits.

The catalysed reaction is L-glutamyl-tRNA(Gln) + L-glutamine + ATP + H2O = L-glutaminyl-tRNA(Gln) + L-glutamate + ADP + phosphate + H(+). It carries out the reaction L-aspartyl-tRNA(Asn) + L-glutamine + ATP + H2O = L-asparaginyl-tRNA(Asn) + L-glutamate + ADP + phosphate + 2 H(+). Allows the formation of correctly charged Asn-tRNA(Asn) or Gln-tRNA(Gln) through the transamidation of misacylated Asp-tRNA(Asn) or Glu-tRNA(Gln) in organisms which lack either or both of asparaginyl-tRNA or glutaminyl-tRNA synthetases. The reaction takes place in the presence of glutamine and ATP through an activated phospho-Asp-tRNA(Asn) or phospho-Glu-tRNA(Gln). In Streptococcus pyogenes serotype M18 (strain MGAS8232), this protein is Aspartyl/glutamyl-tRNA(Asn/Gln) amidotransferase subunit C.